The chain runs to 312 residues: Ribosomal protein L11 methyltransferase (312 aa).

The S-adenosyl-L-methionine site is built by Thr-162, Gly-183, Asp-205, and Asn-248.

The protein belongs to the methyltransferase superfamily. PrmA family.

The protein resides in the cytoplasm. It carries out the reaction L-lysyl-[protein] + 3 S-adenosyl-L-methionine = N(6),N(6),N(6)-trimethyl-L-lysyl-[protein] + 3 S-adenosyl-L-homocysteine + 3 H(+). Its function is as follows. Methylates ribosomal protein L11. This chain is Ribosomal protein L11 methyltransferase, found in Exiguobacterium sp. (strain ATCC BAA-1283 / AT1b).